Here is a 388-residue protein sequence, read N- to C-terminus: Cystathionine gamma-synthase (388 aa).

Residues 1–24 (MSEDRTGHQGISGPATRAIHAGYR) are disordered. Lys208 is subject to N6-(pyridoxal phosphate)lysine.

Belongs to the trans-sulfuration enzymes family. As to quaternary structure, homotetramer. Pyridoxal 5'-phosphate serves as cofactor.

The protein resides in the cytoplasm. The enzyme catalyses O-succinyl-L-homoserine + L-cysteine = L,L-cystathionine + succinate + H(+). Its function is as follows. Catalyzes the formation of L-cystathionine from O-succinyl-L-homoserine (OSHS) and L-cysteine, via a gamma-replacement reaction. In the absence of thiol, catalyzes gamma-elimination to form 2-oxobutanoate, succinate and ammonia. This chain is Cystathionine gamma-synthase (metB), found in Mycobacterium bovis (strain ATCC BAA-935 / AF2122/97).